The sequence spans 100 residues: Urease subunit gamma (100 aa).

It belongs to the urease gamma subunit family. In terms of assembly, heterotrimer of UreA (gamma), UreB (beta) and UreC (alpha) subunits. Three heterotrimers associate to form the active enzyme.

Its subcellular location is the cytoplasm. The catalysed reaction is urea + 2 H2O + H(+) = hydrogencarbonate + 2 NH4(+). It participates in nitrogen metabolism; urea degradation; CO(2) and NH(3) from urea (urease route): step 1/1. The sequence is that of Urease subunit gamma from Mycobacterium bovis (strain ATCC BAA-935 / AF2122/97).